A 182-amino-acid chain; its full sequence is NADH-quinone oxidoreductase subunit B (182 aa).

4 residues coordinate [4Fe-4S] cluster: Cys61, Cys62, Cys126, and Cys156.

It belongs to the complex I 20 kDa subunit family. NDH-1 is composed of 14 different subunits. Subunits NuoB, C, D, E, F, and G constitute the peripheral sector of the complex. Requires [4Fe-4S] cluster as cofactor.

Its subcellular location is the cell inner membrane. The enzyme catalyses a quinone + NADH + 5 H(+)(in) = a quinol + NAD(+) + 4 H(+)(out). Its function is as follows. NDH-1 shuttles electrons from NADH, via FMN and iron-sulfur (Fe-S) centers, to quinones in the respiratory chain. The immediate electron acceptor for the enzyme in this species is believed to be ubiquinone. Couples the redox reaction to proton translocation (for every two electrons transferred, four hydrogen ions are translocated across the cytoplasmic membrane), and thus conserves the redox energy in a proton gradient. This is NADH-quinone oxidoreductase subunit B from Xanthomonas oryzae pv. oryzae (strain PXO99A).